Reading from the N-terminus, the 567-residue chain is Urease subunit alpha (567 aa).

The Urease domain maps to 129–567 (GGIDAHIHFI…LPLTQRYCLF (439 aa)). Residues His134, His136, and Lys217 each contribute to the Ni(2+) site. At Lys217 the chain carries N6-carboxylysine. Residue His219 participates in substrate binding. Residues His246 and His272 each coordinate Ni(2+). The Proton donor role is filled by His320. Asp360 contacts Ni(2+).

This sequence belongs to the metallo-dependent hydrolases superfamily. Urease alpha subunit family. As to quaternary structure, heterotrimer of UreA (gamma), UreB (beta) and UreC (alpha) subunits. Three heterotrimers associate to form the active enzyme. It depends on Ni cation as a cofactor. Carboxylation allows a single lysine to coordinate two nickel ions.

It is found in the cytoplasm. The catalysed reaction is urea + 2 H2O + H(+) = hydrogencarbonate + 2 NH4(+). It participates in nitrogen metabolism; urea degradation; CO(2) and NH(3) from urea (urease route): step 1/1. The chain is Urease subunit alpha from Psychromonas ingrahamii (strain DSM 17664 / CCUG 51855 / 37).